A 375-amino-acid chain; its full sequence is Growth/differentiation factor 8 (375 aa).

Positions Met-1–Leu-23 are cleaved as a signal peptide. Positions Asp-24–Arg-266 are excised as a propeptide. Asn-71 carries N-linked (GlcNAc...) asparagine glycosylation. 4 cysteine pairs are disulfide-bonded: Cys-272–Cys-282, Cys-281–Cys-340, Cys-309–Cys-372, and Cys-313–Cys-374.

It belongs to the TGF-beta family. Homodimer; disulfide-linked.

It localises to the secreted. In terms of biological role, acts specifically as a negative regulator of skeletal muscle growth. This chain is Growth/differentiation factor 8 (MSTN), found in Coturnix coturnix (Common quail).